The sequence spans 212 residues: uncharacterized protein (212 aa).

The protein belongs to the mimivirus R683/R861 family.

This is an uncharacterized protein from Acanthamoeba polyphaga (Amoeba).